We begin with the raw amino-acid sequence, 184 residues long: Probable gluconokinase (184 aa).

11 to 18 (GVSGSGKS) contributes to the ATP binding site.

Belongs to the gluconokinase GntK/GntV family.

It carries out the reaction D-gluconate + ATP = 6-phospho-D-gluconate + ADP + H(+). The protein operates within carbohydrate acid metabolism; D-gluconate degradation. This chain is Probable gluconokinase (Idnk), found in Mus musculus (Mouse).